The primary structure comprises 129 residues: 8-oxo-dGTP diphosphatase (129 aa).

Residues 1–129 (MKKLQIAVGI…EPVIAKLKRL (129 aa)) form the Nudix hydrolase domain. 8-oxo-dGTP is bound by residues Arg-23, His-28, and 34 to 37 (EFPG). Mg(2+)-binding residues include Gly-37 and Glu-57. The short motif at 38-59 (GKIEMGETPEQAVVRELQEEVG) is the Nudix box element. Position 119 (Asn-119) interacts with 8-oxo-dGTP.

This sequence belongs to the Nudix hydrolase family. As to quaternary structure, monomer. Requires Mg(2+) as cofactor.

It carries out the reaction 8-oxo-dGTP + H2O = 8-oxo-dGMP + diphosphate + H(+). It catalyses the reaction 8-oxo-GTP + H2O = 8-oxo-GMP + diphosphate + H(+). The catalysed reaction is 8-oxo-dGDP + H2O = 8-oxo-dGMP + phosphate + H(+). The enzyme catalyses 8-oxo-GDP + H2O = 8-oxo-GMP + phosphate + H(+). Specifically hydrolyzes both 8-oxo-deoxyguanosine triphosphate (8-oxo-dGTP) and 8-oxo-guanosine triphosphate (8-oxo-GTP) to the related monophosphates, thereby cleaning up the nucleotide pools and preventing misincorporation of 8-oxoGua into DNA and RNA. It prevents replicational errors by removing an oxidatively damaged form of guanine (8-oxo-dGTP) from DNA and the nucleotide pool. 8-oxo-dGTP can be inserted opposite dA and dC residues of template DNA with almost equal efficiency thus leading to A.T to G.C transversions. MutT may also ensure transcriptional fidelity, removing 8-oxo-GTP from the ribonucleotide triphosphate pool. However, due to the lower efficiency of RNA polymerase 8-oxo-GTP incorporation, MutT is probably not a major contributor to transcriptional fidelity. It also hydrolyzes 8-oxo-dGDP and 8-oxo-GDP to their monophosphate form. In vitro, can also use dGTP, dGDP and other various nucleoside di- and triphosphates, with much lower efficiency. Works cooperatively with MutM and MutY to prevent accumulation in the DNA of oxidized guanine residues. The sequence is that of 8-oxo-dGTP diphosphatase from Escherichia coli (strain K12).